We begin with the raw amino-acid sequence, 454 residues long: tRNA-2-methylthio-N(6)-dimethylallyladenosine synthase (454 aa).

An MTTase N-terminal domain is found at 6–122 (RRYHITTFGC…LKDLLESVFA (117 aa)). The [4Fe-4S] cluster site is built by Cys15, Cys51, Cys85, Cys157, Cys161, and Cys164. Residues 143–380 (RDSTVTAWVN…NHLVNVKAAE (238 aa)) form the Radical SAM core domain. In terms of domain architecture, TRAM spans 383–447 (QRYMGRIEEV…AFSLTGEPIE (65 aa)).

The protein belongs to the methylthiotransferase family. MiaB subfamily. As to quaternary structure, monomer. Requires [4Fe-4S] cluster as cofactor.

The protein resides in the cytoplasm. It carries out the reaction N(6)-dimethylallyladenosine(37) in tRNA + (sulfur carrier)-SH + AH2 + 2 S-adenosyl-L-methionine = 2-methylsulfanyl-N(6)-dimethylallyladenosine(37) in tRNA + (sulfur carrier)-H + 5'-deoxyadenosine + L-methionine + A + S-adenosyl-L-homocysteine + 2 H(+). Functionally, catalyzes the methylthiolation of N6-(dimethylallyl)adenosine (i(6)A), leading to the formation of 2-methylthio-N6-(dimethylallyl)adenosine (ms(2)i(6)A) at position 37 in tRNAs that read codons beginning with uridine. The chain is tRNA-2-methylthio-N(6)-dimethylallyladenosine synthase from Nostoc sp. (strain PCC 7120 / SAG 25.82 / UTEX 2576).